The primary structure comprises 203 residues: uncharacterized protein (203 aa).

The disordered stretch occupies residues 117–138 (SSDPKLKQPSNCLNDQTNNDSA). Over residues 124–138 (QPSNCLNDQTNNDSA) the composition is skewed to polar residues.

The protein resides in the cytoplasm. Its subcellular location is the nucleus. This is an uncharacterized protein from Schizosaccharomyces pombe (strain 972 / ATCC 24843) (Fission yeast).